Here is a 131-residue protein sequence, read N- to C-terminus: Large ribosomal subunit protein eL32 (131 aa).

It belongs to the eukaryotic ribosomal protein eL32 family.

The sequence is that of Large ribosomal subunit protein eL32 (RPL32) from Eremothecium gossypii (strain ATCC 10895 / CBS 109.51 / FGSC 9923 / NRRL Y-1056) (Yeast).